The primary structure comprises 270 residues: uncharacterized protein (270 aa).

This is an uncharacterized protein from Aquifex aeolicus (strain VF5).